Reading from the N-terminus, the 294-residue chain is tRNA dimethylallyltransferase (294 aa).

10–17 (GPTAVGKT) lines the ATP pocket. 12–17 (TAVGKT) contributes to the substrate binding site. The tract at residues 35-38 (DSQQ) is interaction with substrate tRNA.

It belongs to the IPP transferase family. In terms of assembly, monomer. It depends on Mg(2+) as a cofactor.

It catalyses the reaction adenosine(37) in tRNA + dimethylallyl diphosphate = N(6)-dimethylallyladenosine(37) in tRNA + diphosphate. Its function is as follows. Catalyzes the transfer of a dimethylallyl group onto the adenine at position 37 in tRNAs that read codons beginning with uridine, leading to the formation of N6-(dimethylallyl)adenosine (i(6)A). This Streptococcus gordonii (strain Challis / ATCC 35105 / BCRC 15272 / CH1 / DL1 / V288) protein is tRNA dimethylallyltransferase.